The following is a 976-amino-acid chain: 3-O-beta-L-arabinopyranosyl-alpha-L-arabinofuranosidase (976 aa).

The signal sequence occupies residues 1–28 (MSHRNKALVAIVAGTALLISSGAAIGQA). Glu-190 acts as the Proton donor in catalysis. Glu-315 acts as the Nucleophile in catalysis. Positions 519–654 (LLVEEVENTV…DNTLDKFLLY (136 aa)) constitute a CBM6 domain.

It belongs to the glycosyl hydrolase 39 family.

It localises to the secreted. It carries out the reaction Hydrolysis of beta-L-Arap-(1-&gt;3)-L-Araf disaccharides from non-reducing terminals in branches of type II arabinogalactan attached to proteins.. In terms of biological role, hydrolase involved in the degradation of the gum arabic arabinogalactan protein (AGP) and larch AGP. Catalyzes the release of 3-O-beta-L-arabinopyranosyl-L-arabinose (beta-L-Arap-(1-&gt;3)-L-Ara) from gum arabic AGP and larch AGP. Also cleaves a small amount of beta-L-Arap-(1-&gt;3)-L-Ara from sugar beet arabinan, but wheat AGP cannot be used as a substrate. Can also release 3-O-alpha-D-galactopyranosyl-L-arabinose (alpha-D-Galp-(1-&gt;3)-L-Ara) from gum arabic AGP, with low efficiency. This is 3-O-beta-L-arabinopyranosyl-alpha-L-arabinofuranosidase from Bifidobacterium pseudocatenulatum.